The following is a 451-amino-acid chain: Protein-tyrosine kinase 6 (451 aa).

The 65-residue stretch at histidine 8 to threonine 72 folds into the SH3 domain. A phosphotyrosine; by autocatalysis mark is found at tyrosine 13, tyrosine 61, tyrosine 66, and tyrosine 114. One can recognise an SH2 domain in the interval tryptophan 78–cysteine 170. The linker stretch occupies residues arginine 171–glutamate 190. The Protein kinase domain maps to phenylalanine 191 to threonine 445. Residues leucine 197–valine 205 and lysine 219 contribute to the ATP site. Aspartate 312 serves as the catalytic Proton acceptor. 2 positions are modified to phosphotyrosine; by autocatalysis: tyrosine 342 and tyrosine 351. Position 447 is a phosphotyrosine (tyrosine 447).

This sequence belongs to the protein kinase superfamily. Tyr protein kinase family. BRK/PTK6/SIK subfamily. As to quaternary structure, interacts with GAP-A.p65. Interacts (via SH3 and SH2 domains) with KHDRBS1. Interacts (via SH3 and SH2 domains) with phosphorylated IRS4. Interacts with ADAM15. Interacts (via SH3 domain) with SFPQ. Interacts with EGFR and ERBB2. Interacts with STAP2. Interacts with PNX. Interacts with SFPQ. Interacts with PTK/ATK. Interacts with CTNNB1. Autophosphorylated. Autophosphorylation of Tyr-342 leads to an increase of kinase activity. Tyr-447 binds to the SH2 domain when phosphorylated and negatively regulates kinase activity. As to expression, epithelia-specific. Very high level in colon and high levels in small intestine and prostate, and low levels in some fetal tissues. Not expressed in breast or ovarian tissue but expressed in high percentage of breast and ovarian cancers. Also overexpressed in some metastatic melanomas, lymphomas, colon cancers, squamous cell carcinomas and prostate cancers. Also found in melanocytes. Not expressed in heart, brain, placenta, lung, liver, skeletal muscle, kidney and pancreas. Isoform 2 is present in prostate epithelial cell lines derived from normal prostate and prostate adenocarcinomas, as well as in a variety of cell lines.

It localises to the cytoplasm. The protein resides in the nucleus. It is found in the cell projection. The protein localises to the ruffle. Its subcellular location is the membrane. It catalyses the reaction L-tyrosyl-[protein] + ATP = O-phospho-L-tyrosyl-[protein] + ADP + H(+). Its activity is regulated as follows. Activated by EGF, NRG1 and IGF1. Inhibited by SOCS3 to phosphorylate STAT3. Stabilized in the inactive form by an association between the SH3 domain and the SH2-TK linker region. Interaction between Trp-184 within SH2-TK linker region and the catalytic domain appears essential for positive regulation of kinase activity. Functionally, non-receptor tyrosine-protein kinase implicated in the regulation of a variety of signaling pathways that control the differentiation and maintenance of normal epithelia, as well as tumor growth. Function seems to be context dependent and differ depending on cell type, as well as its intracellular localization. A number of potential nuclear and cytoplasmic substrates have been identified. These include the RNA-binding proteins: KHDRBS1/SAM68, KHDRBS2/SLM1, KHDRBS3/SLM2 and SFPQ/PSF; transcription factors: STAT3 and STAT5A/B and a variety of signaling molecules: ARHGAP35/p190RhoGAP, PXN/paxillin, BTK/ATK, STAP2/BKS. Phosphorylates the GTPase-activating protein ARAP1 following EGF stimulation which enhances EGFR signaling by delaying EGFR down-regulation. Also associates with a variety of proteins that are likely upstream of PTK6 in various signaling pathways, or for which PTK6 may play an adapter-like role. These proteins include ADAM15, EGFR, ERBB2, ERBB3 and IRS4. In normal or non-tumorigenic tissues, PTK6 promotes cellular differentiation and apoptosis. In tumors PTK6 contributes to cancer progression by sensitizing cells to mitogenic signals and enhancing proliferation, anchorage-independent survival and migration/invasion. Association with EGFR, ERBB2, ERBB3 may contribute to mammary tumor development and growth through enhancement of EGF-induced signaling via BTK/AKT and PI3 kinase. Contributes to migration and proliferation by contributing to EGF-mediated phosphorylation of ARHGAP35/p190RhoGAP, which promotes association with RASA1/p120RasGAP, inactivating RhoA while activating RAS. EGF stimulation resulted in phosphorylation of PNX/Paxillin by PTK6 and activation of RAC1 via CRK/CrKII, thereby promoting migration and invasion. PTK6 activates STAT3 and STAT5B to promote proliferation. Nuclear PTK6 may be important for regulating growth in normal epithelia, while cytoplasmic PTK6 might activate oncogenic signaling pathways. Inhibits PTK6 phosphorylation and PTK6 association with other tyrosine-phosphorylated proteins. This chain is Protein-tyrosine kinase 6 (PTK6), found in Homo sapiens (Human).